A 493-amino-acid polypeptide reads, in one-letter code: Aerolysin (493 aa).

The first 23 residues, 1–23, serve as a signal peptide directing secretion; that stretch reads MQKIKLTGLSLIISGLLMAQAQA. Intrachain disulfides connect Cys42–Cys98 and Cys182–Cys187. The interaction with host N-linked glycan stretch occupies residues 68–84; that stretch reads WQISGLANGWVIMGPGY. The tract at residues 256–288 is part of the transmembrane beta-barrel after proteolytic activation of the toxin and insertion into the host membrane; that stretch reads YGLSEKVTTKNKFKWPLVGETELSIEIAANQSW. The interval 346-355 is interaction with glycans from host GPI-anchor; that stretch reads RWGGNAWYTH. A propeptide spanning residues 446 to 493 is cleaved from the precursor; it reads AADSKVRRARSVDGAGQGLRLEIPLDAQELSGLGFNNVSLSVTPAANQ.

This sequence belongs to the aerolysin family. As to quaternary structure, homodimer in solution; homoheptamer in the host membrane. After binding to GPI-anchored proteins in target membranes and proteolytic removal of the C-terminal propeptide, the protein assembles into a heptameric pre-pore complex. A further conformation change leads to insertion into the host membrane. Proteolytic cleavage and subsequent release of the propeptide trigger a major conformation change, leading to the formation of a heptameric pre-pore that then inserts into the host membrane.

Its subcellular location is the secreted. The protein resides in the host cell membrane. Secreted, cytolytic toxin that forms pores in host membranes after proteolytic removal of a C-terminal propeptide, leading to destruction of the membrane permeability barrier and host cell death. The pores are formed by transmembrane beta-strands and are approximately 3 nm in diameter. This Aeromonas hydrophila protein is Aerolysin (aerA).